A 332-amino-acid chain; its full sequence is Ribosomal RNA small subunit methyltransferase H (332 aa).

S-adenosyl-L-methionine contacts are provided by residues 39 to 41 (GGY), Asp-56, Phe-83, Asp-100, and Gln-107.

The protein belongs to the methyltransferase superfamily. RsmH family.

The protein resides in the cytoplasm. The catalysed reaction is cytidine(1402) in 16S rRNA + S-adenosyl-L-methionine = N(4)-methylcytidine(1402) in 16S rRNA + S-adenosyl-L-homocysteine + H(+). Its function is as follows. Specifically methylates the N4 position of cytidine in position 1402 (C1402) of 16S rRNA. The polypeptide is Ribosomal RNA small subunit methyltransferase H (Bartonella grahamii (strain as4aup)).